Here is a 216-residue protein sequence, read N- to C-terminus: Flavin prenyltransferase UbiX (216 aa).

FMN-binding positions include 9 to 11 (GAS), serine 35, and arginine 144. 2 residues coordinate dimethylallyl phosphate: tyrosine 174 and arginine 190.

The protein belongs to the UbiX/PAD1 family.

The catalysed reaction is dimethylallyl phosphate + FMNH2 = prenylated FMNH2 + phosphate. Its function is as follows. Flavin prenyltransferase that catalyzes the synthesis of the prenylated FMN cofactor (prenyl-FMN) for 4-hydroxy-3-polyprenylbenzoic acid decarboxylase UbiD. The prenyltransferase is metal-independent and links a dimethylallyl moiety from dimethylallyl monophosphate (DMAP) to the flavin N5 and C6 atoms of FMN. The polypeptide is Flavin prenyltransferase UbiX (Streptomyces coelicolor (strain ATCC BAA-471 / A3(2) / M145)).